We begin with the raw amino-acid sequence, 871 residues long: Coatomer subunit gamma-2 (871 aa).

Basic and acidic residues predominate over residues 1–11; it reads MIKKFDKKDEE. Residues 1–21 form a disordered region; sequence MIKKFDKKDEESGSGSNPFQH. 6 HEAT repeats span residues 64–101, 283–320, 321–355, 356–392, 395–430, and 467–504; these read TEAT…ISED, RELA…KHPS, AVTA…GSES, SVDR…KYPR, SVMM…ENPE, and PVPS…QNES. T594 bears the Phosphothreonine mark.

Belongs to the COPG family. In terms of assembly, oligomeric complex. Binds to CDC42. Interacts with JAGN1. Interacts with TMED10 (via cytoplasmic domain).

The protein localises to the cytoplasm. The protein resides in the cytosol. It is found in the golgi apparatus membrane. Its subcellular location is the cytoplasmic vesicle. It localises to the COPI-coated vesicle membrane. Functionally, the coatomer is a cytosolic protein complex that binds to dilysine motifs and reversibly associates with Golgi non-clathrin-coated vesicles, which further mediate biosynthetic protein transport from the ER, via the Golgi up to the trans Golgi network. Coatomer complex is required for budding from Golgi membranes, and is essential for the retrograde Golgi-to-ER transport of dilysine-tagged proteins. In mammals, the coatomer can only be recruited by membranes associated to ADP-ribosylation factors (ARFs), which are small GTP-binding proteins; the complex also influences the Golgi structural integrity, as well as the processing, activity, and endocytic recycling of LDL receptors. The sequence is that of Coatomer subunit gamma-2 (COPG2) from Homo sapiens (Human).